We begin with the raw amino-acid sequence, 168 residues long: G/U mismatch-specific DNA glycosylase (168 aa).

It belongs to the uracil-DNA glycosylase (UDG) superfamily. TDG/mug family. In terms of assembly, binds DNA as a monomer.

It localises to the cytoplasm. The catalysed reaction is Specifically hydrolyzes mismatched double-stranded DNA and polynucleotides, releasing free uracil.. In terms of biological role, excises ethenocytosine and uracil, which can arise by alkylation or deamination of cytosine, respectively, from the corresponding mispairs with guanine in ds-DNA. It is capable of hydrolyzing the carbon-nitrogen bond between the sugar-phosphate backbone of the DNA and the mispaired base. The complementary strand guanine functions in substrate recognition. Required for DNA damage lesion repair in stationary-phase cells. In Salmonella paratyphi B (strain ATCC BAA-1250 / SPB7), this protein is G/U mismatch-specific DNA glycosylase.